The following is a 49-amino-acid chain: Multidrug efflux pump accessory protein AcrZ (49 aa).

Over 1–7 the chain is Periplasmic; it reads MLELLKS. Residues 8 to 28 traverse the membrane as a helical segment; that stretch reads LVFAVIMVPVVMAIILGLIYG. Residues 29–49 are Cytoplasmic-facing; it reads LGEVFNIFSGVGKKDQPGQNH.

Belongs to the AcrZ family. As to quaternary structure, part of the AcrA-AcrB-AcrZ-TolC efflux pump, interacts directly with AcrB.

The protein resides in the cell inner membrane. In terms of biological role, acrA-AcrB-AcrZ-TolC is a drug efflux protein complex with a broad substrate specificity. This protein binds to AcrB and is required for efflux of some but not all substrates, suggesting it may influence the specificity of drug export. This is Multidrug efflux pump accessory protein AcrZ from Escherichia coli O157:H7.